The chain runs to 696 residues: Junctophilin-2 (696 aa).

Topologically, residues 1–674 are cytoplasmic; the sequence is MSGGRFDFDD…EVEVEEVPNT (674 aa). MORN repeat units follow at residues 14-36, 38-59, 60-79, 82-104, 106-128, and 129-151; these read YCGG…KGQG, YSGS…SGNT, FEGY…TKGR, YKGE…NSGA, YEGT…DGGT, and YQGQ…PYGM. Phosphoserine occurs at positions 162 and 165. 2 disordered regions span residues 164-192 and 246-273; these read SSLR…SPPV and LSSG…AAPF. MORN repeat units follow at residues 285–307 and 308–330; these read YMGE…SGLR and YEGE…DGHR. A Bipartite nuclear localization signal motif is present at residues 345–359; sequence KRRVLPLKSSKVRQK. The interval 439–664 is disordered; sequence NSESLLEPPE…RKEVAQAKEA (226 aa). A phosphoserine mark is found at Ser440, Ser442, and Ser462. The segment covering 457–471 has biased composition (basic and acidic residues); the sequence is ERPRESPQLHERETP. Thr470 is modified (phosphothreonine). The segment covering 474–487 has biased composition (pro residues); sequence EGGPPSPAGTPPQP. Ser479 bears the Phosphoserine mark. Thr483 is modified (phosphothreonine). Positions 488 to 492 match the Nuclear localization signal motif; it reads KRPRP. Phosphoserine occurs at positions 527 and 533. Residues 573 to 585 are compositionally biased toward acidic residues; the sequence is PLEDEQEPEPEPE. 3 positions are modified to phosphoserine: Ser593, Ser597, and Ser613. The segment covering 631 to 644 has biased composition (basic and acidic residues); the sequence is AEPKAKARKTEARG. Residues 675–695 traverse the membrane as a helical; Anchor for type IV membrane protein segment; sequence VLICMVILLNIGLAILFVHLL.

This sequence belongs to the junctophilin family. Interacts with TRPC3. Interacts with BAG5 and HSPA8; the interaction with HSPA8 is increased in the presence of BAG5. As to quaternary structure, interacts with MEF2C. In terms of processing, proteolytically cleaved by calpain in response to cardiac stress. The major cleavage site takes place at the C-terminus and leads to the release of the Junctophilin-2 N-terminal fragment chain (JP2NT). Phosphorylation on Ser-165, probably by PKC, affects RYR1-mediated calcium ion release, interaction with TRPC3, and skeletal muscle myotubule development. Abundantly expressed in skeletal muscle and heart. Weak expression in stomach and lung.

Its subcellular location is the cell membrane. The protein resides in the sarcoplasmic reticulum membrane. The protein localises to the endoplasmic reticulum membrane. It localises to the nucleus. In terms of biological role, membrane-binding protein that provides a structural bridge between the plasma membrane and the sarcoplasmic reticulum and is required for normal excitation-contraction coupling in cardiomyocytes. Provides a structural foundation for functional cross-talk between the cell surface and intracellular Ca(2+) release channels by maintaining the 12-15 nm gap between the sarcolemma and the sarcoplasmic reticulum membranes in the cardiac dyads. Necessary for proper intracellular Ca(2+) signaling in cardiac myocytes via its involvement in ryanodine receptor-mediated calcium ion release. Contributes to the construction of skeletal muscle triad junctions. Its function is as follows. Transcription repressor required to safeguard against the deleterious effects of cardiac stress. Generated following cleavage of the Junctophilin-2 chain by calpain in response to cardiac stress in cardiomyocytes. Following cleavage and release from the membrane, translocates to the nucleus, binds DNA and represses expression of genes implicated in cell growth and differentiation, hypertrophy, inflammation and fibrosis. Modifies the transcription profile and thereby attenuates pathological remodeling in response to cardiac stress. Probably acts by competing with MEF2 transcription factors and TATA-binding proteins. The protein is Junctophilin-2 of Mus musculus (Mouse).